A 400-amino-acid chain; its full sequence is Golgin-45 (400 aa).

Residues 1–36 form a disordered region; it reads MEKMTTLKSFESKGILTSTPIRGAGDGMETEEPPKS. A Tankyrase-binding motif motif is present at residues 22–26; the sequence is RGAGD. Serine 53 is modified (phosphoserine). The stretch at 126-263 forms a coiled coil; that stretch reads LSEVKKVLEK…LSEREQFRQE (138 aa). Phosphoserine is present on serine 356. Positions 394-400 are essential for interaction with GORASP2; the sequence is QGELLAL.

In terms of assembly, interacts with GORASP2. Interacts with the GTP-bound form of RAB2, but not with other Golgi Rab proteins. Identified in a complex with RAB2 and GORASP2. Post-translationally, ADP-ribosylated by tankyrase TNKS and TNKS2. Poly-ADP-ribosylated protein is recognized by RNF146, followed by ubiquitination. Ubiquitinated by RNF146 when poly-ADP-ribosylated, leading to its degradation.

It is found in the golgi apparatus membrane. Required for normal Golgi structure and for protein transport from the endoplasmic reticulum (ER) through the Golgi apparatus to the cell surface. The polypeptide is Golgin-45 (Rattus norvegicus (Rat)).